A 55-amino-acid chain; its full sequence is Large ribosomal subunit protein bL33 (55 aa).

Belongs to the bacterial ribosomal protein bL33 family.

The sequence is that of Large ribosomal subunit protein bL33 from Aliivibrio salmonicida (strain LFI1238) (Vibrio salmonicida (strain LFI1238)).